A 34-amino-acid polypeptide reads, in one-letter code: Corticostatin-2 (34 aa).

3 disulfides stabilise this stretch: Cys-3–Cys-32, Cys-5–Cys-21, and Cys-11–Cys-31.

This sequence belongs to the alpha-defensin family.

The protein localises to the secreted. Functionally, microbicidal activity and inhibits corticotropin (ACTH) stimulated corticosterone production. In Oryctolagus cuniculus (Rabbit), this protein is Corticostatin-2.